The sequence spans 375 residues: Holliday junction branch migration complex subunit RuvB (375 aa).

The tract at residues 1–50 (MAIVSSKSPDPAERRSQAKTKPSVSEPQDSLVRPQAAPEESQRPEDQIRP) is disordered. Residues 13-209 (ERRSQAKTKP…FGLVQRLRFY (197 aa)) form a large ATPase domain (RuvB-L) region. Residues 19–28 (KTKPSVSEPQ) show a composition bias toward polar residues. Over residues 40–49 (ESQRPEDQIR) the composition is skewed to basic and acidic residues. Residues I48, R49, G90, K93, T94, T95, 156–158 (EDF), R199, Y209, and R246 contribute to the ATP site. Residue T94 participates in Mg(2+) binding. The tract at residues 210-280 (EVEALTDIVQ…IAATALELYN (71 aa)) is small ATPAse domain (RuvB-S). A head domain (RuvB-H) region spans residues 283 to 375 (PCGLDWTDRR…LQQLLTEPET (93 aa)). Positions 338 and 343 each coordinate DNA.

Belongs to the RuvB family. As to quaternary structure, homohexamer. Forms an RuvA(8)-RuvB(12)-Holliday junction (HJ) complex. HJ DNA is sandwiched between 2 RuvA tetramers; dsDNA enters through RuvA and exits via RuvB. An RuvB hexamer assembles on each DNA strand where it exits the tetramer. Each RuvB hexamer is contacted by two RuvA subunits (via domain III) on 2 adjacent RuvB subunits; this complex drives branch migration. In the full resolvosome a probable DNA-RuvA(4)-RuvB(12)-RuvC(2) complex forms which resolves the HJ.

The protein localises to the cytoplasm. The catalysed reaction is ATP + H2O = ADP + phosphate + H(+). Functionally, the RuvA-RuvB-RuvC complex processes Holliday junction (HJ) DNA during genetic recombination and DNA repair, while the RuvA-RuvB complex plays an important role in the rescue of blocked DNA replication forks via replication fork reversal (RFR). RuvA specifically binds to HJ cruciform DNA, conferring on it an open structure. The RuvB hexamer acts as an ATP-dependent pump, pulling dsDNA into and through the RuvAB complex. RuvB forms 2 homohexamers on either side of HJ DNA bound by 1 or 2 RuvA tetramers; 4 subunits per hexamer contact DNA at a time. Coordinated motions by a converter formed by DNA-disengaged RuvB subunits stimulates ATP hydrolysis and nucleotide exchange. Immobilization of the converter enables RuvB to convert the ATP-contained energy into a lever motion, pulling 2 nucleotides of DNA out of the RuvA tetramer per ATP hydrolyzed, thus driving DNA branch migration. The RuvB motors rotate together with the DNA substrate, which together with the progressing nucleotide cycle form the mechanistic basis for DNA recombination by continuous HJ branch migration. Branch migration allows RuvC to scan DNA until it finds its consensus sequence, where it cleaves and resolves cruciform DNA. The polypeptide is Holliday junction branch migration complex subunit RuvB (Synechococcus elongatus (strain ATCC 33912 / PCC 7942 / FACHB-805) (Anacystis nidulans R2)).